Consider the following 156-residue polypeptide: Arginine repressor (156 aa).

It belongs to the ArgR family.

It localises to the cytoplasm. Its pathway is amino-acid biosynthesis; L-arginine biosynthesis [regulation]. In terms of biological role, regulates arginine biosynthesis genes. This Klebsiella pneumoniae (strain 342) protein is Arginine repressor.